Consider the following 504-residue polypeptide: Cytochrome P450 6a9 (504 aa).

Cys449 provides a ligand contact to heme.

Belongs to the cytochrome P450 family. Heme serves as cofactor.

It is found in the endoplasmic reticulum membrane. The protein localises to the microsome membrane. In terms of biological role, involved in the metabolism of insect hormones and in the breakdown of synthetic insecticides. This is Cytochrome P450 6a9 (Cyp6a9) from Drosophila melanogaster (Fruit fly).